An 816-amino-acid chain; its full sequence is Acyl-homoserine lactone acylase QuiP (816 aa).

The signal sequence occupies residues 1–33; sequence MASPALSHFLPRFGVAAAVAGVLSLTGCQTWNA. Catalysis depends on S262, which acts as the Nucleophile.

The protein belongs to the peptidase S45 family. In terms of assembly, heterodimer of an alpha subunit and a beta subunit processed from the same precursor.

The protein localises to the periplasm. It catalyses the reaction an N-acyl-L-homoserine lactone + H2O = L-homoserine lactone + a carboxylate. Catalyzes the deacylation of acyl-homoserine lactone (AHL or acyl-HSL), releasing homoserine lactone (HSL) and the corresponding fatty acid. Possesses a specificity for the degradation of long-chain acyl-HSLs (side chains of seven or more carbons in length). The chain is Acyl-homoserine lactone acylase QuiP (quiP) from Pseudomonas fluorescens (strain Pf0-1).